Consider the following 63-residue polypeptide: Ferredoxin (63 aa).

The 28-residue stretch at 2–29 (KVTVDQDLCIACGTCIDLCPSVFDWDDE) folds into the 4Fe-4S ferredoxin-type domain. [4Fe-4S] cluster is bound by residues Cys-10, Cys-13, Cys-16, and Cys-55.

It depends on [4Fe-4S] cluster as a cofactor.

Its function is as follows. Ferredoxins are iron-sulfur proteins that transfer electrons in a wide variety of metabolic reactions. In Moorella thermoacetica (Clostridium thermoaceticum), this protein is Ferredoxin.